The chain runs to 459 residues: Hemopexin (459 aa).

An N-terminal signal peptide occupies residues 1–23; that stretch reads MARALRVPVALWLLGLCWSLAKA. 3 cysteine pairs are disulfide-bonded: Cys52–Cys232, Cys150–Cys155, and Cys189–Cys201. Hemopexin repeat units lie at residues 55-95, 96-140, 141-185, and 186-232; these read GWGF…WKDA, PSPV…FPGI, PFPL…SWPA, and VGNC…FMSC. His81 is a binding site for heme. Residue His151 participates in heme binding. N-linked (GlcNAc...) asparagine glycosylation occurs at Asn188. N-linked (GlcNAc...) asparagine glycosylation is present at Asn218. His237 provides a ligand contact to heme. Residue Asn241 is glycosylated (N-linked (GlcNAc...) asparagine). 3 disulfide bridges follow: Cys250-Cys453, Cys359-Cys401, and Cys411-Cys428. Hemopexin repeat units follow at residues 252–297, 298–345, 350–389, and 393–444; these read PHLV…WPQG, PSTV…FGSP, LHSV…WTEL, and HTKV…LPQA. His286 contacts heme.

It belongs to the hemopexin family.

It localises to the secreted. Binds heme and transports it to the liver for breakdown and iron recovery, after which the free hemopexin returns to the circulation. The chain is Hemopexin (HPX) from Bos taurus (Bovine).